A 333-amino-acid polypeptide reads, in one-letter code: DNA repair and recombination protein RadA (333 aa).

Gly-127–Thr-134 contacts ATP.

It belongs to the eukaryotic RecA-like protein family.

In terms of biological role, involved in DNA repair and in homologous recombination. Binds and assemble on single-stranded DNA to form a nucleoprotein filament. Hydrolyzes ATP in a ssDNA-dependent manner and promotes DNA strand exchange between homologous DNA molecules. This chain is DNA repair and recombination protein RadA, found in Pyrobaculum aerophilum (strain ATCC 51768 / DSM 7523 / JCM 9630 / CIP 104966 / NBRC 100827 / IM2).